The sequence spans 49 residues: MGRFPEAEERLLNKKICMRCNARNAIRATRCRKCGYSALRVKSKESKGA.

Belongs to the eukaryotic ribosomal protein eL40 family.

The sequence is that of Large ribosomal subunit protein eL40 from Methanosarcina barkeri (strain Fusaro / DSM 804).